A 384-amino-acid polypeptide reads, in one-letter code: Succinyl-diaminopimelate desuccinylase (384 aa).

His-73 lines the Zn(2+) pocket. Asp-75 is a catalytic residue. Asp-106 lines the Zn(2+) pocket. Glu-140 serves as the catalytic Proton acceptor. Positions 141, 169, and 358 each coordinate Zn(2+).

The protein belongs to the peptidase M20A family. DapE subfamily. As to quaternary structure, homodimer. Zn(2+) is required as a cofactor. The cofactor is Co(2+).

The enzyme catalyses N-succinyl-(2S,6S)-2,6-diaminopimelate + H2O = (2S,6S)-2,6-diaminopimelate + succinate. The protein operates within amino-acid biosynthesis; L-lysine biosynthesis via DAP pathway; LL-2,6-diaminopimelate from (S)-tetrahydrodipicolinate (succinylase route): step 3/3. In terms of biological role, catalyzes the hydrolysis of N-succinyl-L,L-diaminopimelic acid (SDAP), forming succinate and LL-2,6-diaminopimelate (DAP), an intermediate involved in the bacterial biosynthesis of lysine and meso-diaminopimelic acid, an essential component of bacterial cell walls. The chain is Succinyl-diaminopimelate desuccinylase from Pelagibacter ubique (strain HTCC1062).